The primary structure comprises 211 residues: Probable nicotinate-nucleotide adenylyltransferase (211 aa).

This sequence belongs to the NadD family.

The enzyme catalyses nicotinate beta-D-ribonucleotide + ATP + H(+) = deamido-NAD(+) + diphosphate. Its pathway is cofactor biosynthesis; NAD(+) biosynthesis; deamido-NAD(+) from nicotinate D-ribonucleotide: step 1/1. Catalyzes the reversible adenylation of nicotinate mononucleotide (NaMN) to nicotinic acid adenine dinucleotide (NaAD). The sequence is that of Probable nicotinate-nucleotide adenylyltransferase from Lactiplantibacillus plantarum (strain ATCC BAA-793 / NCIMB 8826 / WCFS1) (Lactobacillus plantarum).